Here is a 133-residue protein sequence, read N- to C-terminus: uncharacterized protein (133 aa).

2 helical membrane-spanning segments follow: residues 13-33 (FLLS…LFLS) and 73-93 (FGNP…LLLL).

It localises to the membrane. This is an uncharacterized protein from Saccharomyces cerevisiae (strain ATCC 204508 / S288c) (Baker's yeast).